Consider the following 167-residue polypeptide: Lipoprotein signal peptidase (167 aa).

A run of 3 helical transmembrane segments spans residues 8-28, 61-81, and 93-113; these read FFLLGLILTVGIDQTVKYWIM, FSHWGLIALTLIILIFLLWLW, and FGLTLIIGGAIGNLIDRICFY. Catalysis depends on residues Asp117 and Asp136. The chain crosses the membrane as a helical span at residues 126–146; the sequence is IFYFAVFNLADTFITLGVIAI.

It belongs to the peptidase A8 family.

The protein resides in the cell inner membrane. It carries out the reaction Release of signal peptides from bacterial membrane prolipoproteins. Hydrolyzes -Xaa-Yaa-Zaa-|-(S,diacylglyceryl)Cys-, in which Xaa is hydrophobic (preferably Leu), and Yaa (Ala or Ser) and Zaa (Gly or Ala) have small, neutral side chains.. It participates in protein modification; lipoprotein biosynthesis (signal peptide cleavage). Functionally, this protein specifically catalyzes the removal of signal peptides from prolipoproteins. The protein is Lipoprotein signal peptidase of Bartonella quintana (strain Toulouse) (Rochalimaea quintana).